The primary structure comprises 501 residues: MSDQQLDQHELQQEENKLIAQRKEKLAAVREARAIAFPNDFRRDAYFADLQKQYADKTKEELEAAAIPVKVAGRIMLNRGSFIVLQDSSERLQVYVNRKTLPEETLAEIKTWDLGDIIGAEGVLARSGKGDLYVDMTSVRLLTKSLRPLPDKHHGLTDTEQRYRQRYVDLMVNEETRHTFRVRSQVIAHIRRFLSERGFLEVETPMLQTIPGGAAAKPFETHHNALDMAMFLRIAPELYLKRLVVGGFEKVFEINRNFRNEGVSTRHNPEFTMLEFYQAYADYEDNMDLTEELFRELAQAVLGTTDVPYGDKVFHFGEPFVRLSVFDSILKYNPEITAADLNDVEKARAIAKKAGAKVLGHEGLGKLQVMIFEELVEHKLEQPHFITRYPFEVSPLARRNDEDPSVTDRFELFIGGREIANAYSELNDAEDQAERFMLQVKEKDAGDDEAMHYDADFINALEYGMPPTAGEGIGIDRLVMLLTNSPSIRDVILFPHMRPQA.

Positions 411 and 418 each coordinate Mg(2+).

It belongs to the class-II aminoacyl-tRNA synthetase family. In terms of assembly, homodimer. Mg(2+) is required as a cofactor.

Its subcellular location is the cytoplasm. The catalysed reaction is tRNA(Lys) + L-lysine + ATP = L-lysyl-tRNA(Lys) + AMP + diphosphate. The polypeptide is Lysine--tRNA ligase (Pseudomonas aeruginosa (strain LESB58)).